Consider the following 621-residue polypeptide: Chaperone protein HtpG (621 aa).

The a; substrate-binding stretch occupies residues 1-328 (MTQEKKKFDA…SEDLPLNISR (328 aa)). The tract at residues 329 to 544 (ESLQHNNVLE…DTAMDIRMER (216 aa)) is b. The segment at 545-621 (FLIEQKQIAN…LNDILQKAIL (77 aa)) is c.

This sequence belongs to the heat shock protein 90 family. As to quaternary structure, homodimer.

It is found in the cytoplasm. Its function is as follows. Molecular chaperone. Has ATPase activity. This Rickettsia prowazekii (strain Madrid E) protein is Chaperone protein HtpG.